A 198-amino-acid polypeptide reads, in one-letter code: Segregation and condensation protein B (198 aa).

A disordered region spans residues 168-198 (KLADPATDEPDQNEMDLFFDRFNQSKEQEEE).

The protein belongs to the ScpB family. In terms of assembly, homodimer. Homodimerization may be required to stabilize the binding of ScpA to the Smc head domains. Component of a cohesin-like complex composed of ScpA, ScpB and the Smc homodimer, in which ScpA and ScpB bind to the head domain of Smc. The presence of the three proteins is required for the association of the complex with DNA.

Its subcellular location is the cytoplasm. Participates in chromosomal partition during cell division. May act via the formation of a condensin-like complex containing Smc and ScpA that pull DNA away from mid-cell into both cell halves. The protein is Segregation and condensation protein B of Listeria monocytogenes serovar 1/2a (strain ATCC BAA-679 / EGD-e).